The following is a 270-amino-acid chain: Regulatory protein RecX (270 aa).

The protein belongs to the RecX family.

Its subcellular location is the cytoplasm. Its function is as follows. Modulates RecA activity. The chain is Regulatory protein RecX from Bacillus cytotoxicus (strain DSM 22905 / CIP 110041 / 391-98 / NVH 391-98).